We begin with the raw amino-acid sequence, 486 residues long: Transcription factor VOZ1 (486 aa).

Positions 208 to 405 (PPSAFLGPKC…VDGKKTSKGK (198 aa)) are VOZ. Cys-217, Cys-222, Cys-236, and His-240 together coordinate Zn(2+). The C3H1-type; atypical zinc-finger motif lies at 217–240 (CALWDCPRPAQGFDWFQDYCSSFH). The disordered stretch occupies residues 424 to 445 (EFPPENNTTNTTNNNKRCIKGR). A compositionally biased stretch (low complexity) spans 429–438 (NNTTNTTNNN).

Homodimer. Interacts with phytochrome B (phyB). In terms of tissue distribution, ubiquitous. Expressed in the vascular bundles of various tissues, specifically in the phloem.

It localises to the cytoplasm. Its subcellular location is the nucleus. In terms of biological role, transcriptional activator acting positively in the phytochrome B signaling pathway. Functions redundantly with VOZ2 to promote flowering downstream of phytochrome B (phyB). Down-regulates 'FLOWERING LOCUS C' (FLC) and up-regulates 'FLOWERING LOCUS T' (FT). Binds to the 38-bp cis-acting region of the AVP1 gene. Interacts with phyB in the cytoplasm and is translocated to the nucleus at signal transmission, where it is subjected to degradation in a phytochrome-dependent manner. The chain is Transcription factor VOZ1 (VOZ1) from Arabidopsis thaliana (Mouse-ear cress).